The sequence spans 690 residues: Choline transporter-like 1 (690 aa).

A helical transmembrane segment spans residues 23–43 (IFWLVLYVVFWIALIVIAVFS). The N-linked (GlcNAc...) asparagine glycan is linked to N134. Helical transmembrane passes span 203-223 (LYKA…FSIV), 237-259 (WLIC…WSYY), 282-302 (ATIY…LVVI), and 334-354 (LLAF…VVCL). Residue N391 is glycosylated (N-linked (GlcNAc...) asparagine). Helical transmembrane passes span 415 to 435 (IYII…QLAI), 464 to 484 (LGSV…RLIL), 565 to 585 (FVLF…SILL), and 594 to 614 (FYMA…HIIL).

This sequence belongs to the CTL (choline transporter-like) family.

The protein localises to the membrane. The polypeptide is Choline transporter-like 1 (Anopheles gambiae (African malaria mosquito)).